We begin with the raw amino-acid sequence, 234 residues long: Enolase-phosphatase E1 (234 aa).

Asp-10 and Glu-12 together coordinate Mg(2+). Substrate is bound by residues 125–126 (SS) and Lys-162. Residue Asp-188 participates in Mg(2+) binding.

Belongs to the HAD-like hydrolase superfamily. MasA/MtnC family. In terms of assembly, monomer. Mg(2+) serves as cofactor.

Its subcellular location is the cytoplasm. It localises to the nucleus. The enzyme catalyses 5-methylsulfanyl-2,3-dioxopentyl phosphate + H2O = 1,2-dihydroxy-5-(methylsulfanyl)pent-1-en-3-one + phosphate. The protein operates within amino-acid biosynthesis; L-methionine biosynthesis via salvage pathway; L-methionine from S-methyl-5-thio-alpha-D-ribose 1-phosphate: step 3/6. It participates in amino-acid biosynthesis; L-methionine biosynthesis via salvage pathway; L-methionine from S-methyl-5-thio-alpha-D-ribose 1-phosphate: step 4/6. Bifunctional enzyme that catalyzes the enolization of 2,3-diketo-5-methylthiopentyl-1-phosphate (DK-MTP-1-P) into the intermediate 2-hydroxy-3-keto-5-methylthiopentenyl-1-phosphate (HK-MTPenyl-1-P), which is then dephosphorylated to form the acireductone 1,2-dihydroxy-3-keto-5-methylthiopentene (DHK-MTPene). The chain is Enolase-phosphatase E1 from Sordaria macrospora (strain ATCC MYA-333 / DSM 997 / K(L3346) / K-hell).